The sequence spans 108 residues: Protein YcgL (108 aa).

The 85-residue stretch at 12-96 folds into the YcgL domain; it reads MFCVIYRSSK…PPEDLLKQHL (85 aa).

The protein is Protein YcgL of Escherichia coli O17:K52:H18 (strain UMN026 / ExPEC).